Reading from the N-terminus, the 328-residue chain is Methionyl-tRNA formyltransferase (328 aa).

110 to 113 (SLLP) lines the (6S)-5,6,7,8-tetrahydrofolate pocket.

Belongs to the Fmt family.

The enzyme catalyses L-methionyl-tRNA(fMet) + (6R)-10-formyltetrahydrofolate = N-formyl-L-methionyl-tRNA(fMet) + (6S)-5,6,7,8-tetrahydrofolate + H(+). Attaches a formyl group to the free amino group of methionyl-tRNA(fMet). The formyl group appears to play a dual role in the initiator identity of N-formylmethionyl-tRNA by promoting its recognition by IF2 and preventing the misappropriation of this tRNA by the elongation apparatus. The chain is Methionyl-tRNA formyltransferase from Prochlorococcus marinus subsp. pastoris (strain CCMP1986 / NIES-2087 / MED4).